The sequence spans 159 residues: GDP-mannose mannosyl hydrolase (159 aa).

Substrate-binding positions include 2-3 (FL), Phe8, and Arg36. In terms of domain architecture, Nudix hydrolase spans 13–153 (RSTPLVSLDF…SRAYFLAEKR (141 aa)). Mg(2+)-binding residues include Gly49, Glu69, and Gln122. The Nudix box motif lies at 50-71 (GRVQKDETLEAAFERLTMAELG).

It belongs to the Nudix hydrolase family. In terms of assembly, homodimer. Mg(2+) is required as a cofactor.

The enzyme catalyses GDP-alpha-D-mannose + H2O = D-mannose + GDP + H(+). Hydrolyzes GDP-mannose. In Escherichia coli O157:H7, this protein is GDP-mannose mannosyl hydrolase.